A 623-amino-acid polypeptide reads, in one-letter code: Leucine-rich repeat, immunoglobulin-like domain and transmembrane domain-containing protein 1 (623 aa).

The first 21 residues, 1–21, serve as a signal peptide directing secretion; sequence MWVALGMLWLLALGGPHQAWS. The region spanning 22–59 is the LRRNT domain; sequence FCPSQCSCSLHILSDGSKARTVVCSDPDLTLPPASIPP. The Lumenal segment spans residues 22–526; sequence FCPSQCSCSL…EVVDAEGTQR (505 aa). LRR repeat units lie at residues 60-81, 84-105, 108-128, 132-153, and 156-177; these read DTCKLRLERTAIRRVPGETFRP, RLEQLWLPYNALSELSTLMLRG, RLRELRLPGNHLVTFPWAALK, QLQLLDLQANRLSTLPPEAVHF, and NLTFLDLSNNQLMRLPEELLDT. N156 carries N-linked (GlcNAc...) asparagine glycosylation. The 53-residue stretch at 201-253 folds into the LRRCT domain; the sequence is NPWVCDCRLYDLVHLLDGWASNLIFIEARLRCGSPRSLAGVAFSQLELRKCQS. Positions 266–332 constitute an Ig-like C2-type domain; it reads PLGSTVLLRC…SGDYICQAKN (67 aa). C275 and C328 are joined by a disulfide. 2 N-linked (GlcNAc...) asparagine glycosylation sites follow: N296 and N455. Residues 430-518 enclose the Fibronectin type-III domain; the sequence is MVRSLKVVGD…QCVIFSTDEV (89 aa). The stretch at 525–548 is one LRR 6 repeat; the sequence is QRLINMVVISVAAIIALPPTLLVC. A helical transmembrane segment spans residues 527–547; sequence LINMVVISVAAIIALPPTLLV. The Cytoplasmic portion of the chain corresponds to 548–623; that stretch reads CCGALRRRCH…GGRRINEYFC (76 aa).

In terms of assembly, homodimer. Interacts with LRIT2; may form a heterodimer with LRIT2. Interacts (via its N-terminal extracellular domain) with metabotropic glutamate receptor GRM6. Interacts (via its extreme C-terminus) with the scaffold protein FRMPD2 (via the third PDZ domain); the interaction leads to their colocalization in photoreceptor synapses. As to expression, retina, outer segments of photoreceptor cells.

The protein localises to the endoplasmic reticulum membrane. It is found in the cell projection. The protein resides in the dendrite. Photoreceptor synaptic protein essential for normal vision. Involved in synapse formation in cone photoreceptor cells. The protein is Leucine-rich repeat, immunoglobulin-like domain and transmembrane domain-containing protein 1 (Lrit1) of Rattus norvegicus (Rat).